Reading from the N-terminus, the 235-residue chain is Mediator of RNA polymerase II transcription subunit 29 (235 aa).

A compositionally biased stretch (low complexity) spans 1-14 (MMNQMGMMMQQQGV). Positions 1–54 (MMNQMGMMMQQQGVGVPGGPGGVGGVGMPGPGGVGVAPGMMQSPQMQQAQQQQV) are disordered. Gly residues predominate over residues 15-36 (GVPGGPGGVGGVGMPGPGGVGV). Positions 37–54 (APGMMQSPQMQQAQQQQV) are enriched in low complexity.

This sequence belongs to the Mediator complex subunit 29 family. Component of the Mediator complex.

It localises to the nucleus. Its function is as follows. Component of the Mediator complex, a coactivator involved in the regulated transcription of nearly all RNA polymerase II-dependent genes. Mediator functions as a bridge to convey information from gene-specific regulatory proteins to the basal RNA polymerase II transcription machinery. Mediator is recruited to promoters by direct interactions with regulatory proteins and serves as a scaffold for the assembly of a functional preinitiation complex with RNA polymerase II and the general transcription factors. In Anopheles gambiae (African malaria mosquito), this protein is Mediator of RNA polymerase II transcription subunit 29 (ix).